A 57-amino-acid chain; its full sequence is Kunitz-type serine protease inhibitor 2 (57 aa).

Residues 5 to 55 (CELPAETGLCKAYIRSFHYNLAAQQCLQFIYGGCGGNANRFKTIDECRRTC) form the BPTI/Kunitz inhibitor domain. 3 cysteine pairs are disulfide-bonded: cysteine 5/cysteine 55, cysteine 14/cysteine 38, and cysteine 30/cysteine 51.

It belongs to the venom Kunitz-type family. Expressed by the venom gland.

Its subcellular location is the secreted. In terms of biological role, serine protease inhibitor. The polypeptide is Kunitz-type serine protease inhibitor 2 (Hemachatus haemachatus (Rinkhals)).